The primary structure comprises 370 residues: Cytochrome b (370 aa).

A run of 4 helical transmembrane segments spans residues 25–45, 69–90, 105–125, and 170–190; these read FGSM…FLAV, WLMQ…YIHI, WLSG…GYVL, and FFAL…LHVM. Positions 75 and 89 each coordinate heme b. Residues H174 and H188 each contribute to the heme b site. H193 contacts a ubiquinone. A run of 4 helical transmembrane segments spans residues 218-238, 280-300, 312-332, and 339-358; these read YKDL…VSFS, LGGA…PFTH, FMQM…WTAT, and FTLI…ISNP.

This sequence belongs to the cytochrome b family. The cytochrome bc1 complex contains 3 respiratory subunits (MT-CYB, CYC1 and UQCRFS1), 2 core proteins (UQCRC1 and UQCRC2) and probably 6 low-molecular weight proteins. Heme b is required as a cofactor.

The protein resides in the mitochondrion inner membrane. Its function is as follows. Component of the ubiquinol-cytochrome c reductase complex (complex III or cytochrome b-c1 complex) that is part of the mitochondrial respiratory chain. The b-c1 complex mediates electron transfer from ubiquinol to cytochrome c. Contributes to the generation of a proton gradient across the mitochondrial membrane that is then used for ATP synthesis. The chain is Cytochrome b (MT-CYB) from Eunectes notaeus (Yellow anaconda).